Reading from the N-terminus, the 114-residue chain is Ferritin-like protein (114 aa).

Residues E29, E59, and H62 each coordinate Fe cation. Positions 86-114 (FTDKPITEIEEETSGGSENTGGDLGIRKL) are cargo-loading peptide. Positions 94 to 114 (IEEETSGGSENTGGDLGIRKL) are disordered. Gly residues predominate over residues 103–114 (ENTGGDLGIRKL).

The protein belongs to the ferritin-like superfamily. In terms of assembly, probably forms a decamer which binds to the pentameric axis of the interior of the protein shell; as the Flp cargo protein is flexible, packing into the shell is not rigid. 3, 4 or 5 cargo decamers bind inside the encapulin nanocompartment. It depends on Fe cation as a cofactor.

It localises to the encapsulin nanocompartment. Cargo protein of a type 1 encapsulin nanocompartment. A ferritin-like protein that probably stores iron in the encapsulin nanocompartment. In Thermotoga maritima (strain ATCC 43589 / DSM 3109 / JCM 10099 / NBRC 100826 / MSB8), this protein is Ferritin-like protein.